The following is a 744-amino-acid chain: Prestin (744 aa).

Residues 1-75 (MDHAEENEIL…PITKWLPAYK (75 aa)) lie on the Cytoplasmic side of the membrane. Residues 76-105 (FKEYVLGDLVSGISTGVLQLPQGLAFAMLA) form a helical membrane-spanning segment. Residues 106 to 108 (AVP) are Extracellular-facing. A helical transmembrane segment spans residues 109–126 (PIFGLYSSFYPVIMYCFL). Topologically, residues 127-137 (GTSRHISIGPF) are cytoplasmic. The chain crosses the membrane as a helical span at residues 138–151 (AVISLMIGGVAVRL). Over 152–168 (VPDDIVIPGGVNATNGT) the chain is Extracellular. The short motif at 158 to 168 (IPGGVNATNGT) is the Involved in motor function element. Asn-163 and Asn-166 each carry an N-linked (GlcNAc...) asparagine glycan. A helical transmembrane segment spans residues 169 to 196 (EARDALRVKVAMSVTLLSGIIQFCLGVC). At 197–206 (RFGFVAIYLT) the chain is on the cytoplasmic side. Residues 207 to 230 (EPLVRGFTTAAAVHVFTSMLKYLF) traverse the membrane as a helical segment. At 231 to 241 (GVKTKRYSGIF) the chain is on the extracellular side. The segment at residues 242 to 253 (SVVYSTVAVLQN) is an intramembrane region (helical). At 254 to 258 (VKNLN) the chain is on the extracellular side. Residues 259 to 282 (VCSLGVGLMVFGLLLGGKEFNERF) traverse the membrane as a helical segment. Topologically, residues 283–291 (KEKLPAPIP) are cytoplasmic. Residues 292 to 307 (LEFFAVVMGTGISAGF) form a helical membrane-spanning segment. At 308 to 332 (NLKESYNVDVVGTLPLGLLPPANPD) the chain is on the extracellular side. The helical transmembrane segment at 333–367 (TSLFHLVYVDAIAIAIVGFSVTISMAKTLANKHGY) threads the bilayer. The Cytoplasmic segment spans residues 368–370 (QVD). Residues 371 to 388 (GNQELIALGLCNSIGSLF) traverse the membrane as a helical segment. Over 389 to 396 (QTFSISCS) the chain is Extracellular. The helical transmembrane segment at 397–406 (LSRSLVQEGT) threads the bilayer. Ser-398 contacts salicylate. Over 407-410 (GGKT) the chain is Cytoplasmic. A helical transmembrane segment spans residues 411–432 (QLAGCLASLMILLVILATGFLF). Over 433–436 (ESLP) the chain is Extracellular. Residues 437-464 (QAVLSAIVIVNLKGMFMQFSDLPFFWRT) form a helical membrane-spanning segment. Position 465 (Ser-465) is a topological domain, cytoplasmic. A helical transmembrane segment spans residues 466–481 (KIELTIWLTTFVSSLF). Residues 482 to 483 (LG) are Extracellular-facing. A helical membrane pass occupies residues 484–504 (LDYGLITAVIIALLTVIYRTQ). The segment at 505–718 (SPSYKVLGKL…AVLGSQLREA (214 aa)) is extended region for STAS domain. Residues 505–744 (SPSYKVLGKL…PNATPATPEA (240 aa)) lie on the Cytoplasmic side of the membrane. One can recognise an STAS domain in the interval 525-713 (AYEEVKEIPG…HSIHDAVLGS (189 aa)). A disordered region spans residues 718–744 (ALAEQEASAPPSQEDLEPNATPATPEA).

The protein belongs to the SLC26A/SulP transporter (TC 2.A.53) family. Homodimer. Interacts (via STAS domain) with CALM; this interaction is calcium-dependent and the STAS domain interacts with only one lobe of CALM which is an elongated conformation. Interacts with MYH1.

It localises to the lateral cell membrane. It carries out the reaction 2 hydrogencarbonate(in) + chloride(out) = 2 hydrogencarbonate(out) + chloride(in). Its function is as follows. Voltage-sensitive motor protein that drives outer hair cell (OHC) electromotility (eM) and participates in sound amplification in the hearing organ. Converts changes in the transmembrane electric potential into mechanical displacements resulting in the coupling of its expansion to movement of a charged voltage sensor across the lipid membrane. The nature of the voltage sensor is not completely clear, and two models compete. In the first model, acts as an incomplete transporter where intracellular chloride anion acts as extrinsic voltage sensor that drives conformational change in the protein which is sufficient to produce a length change in the plane of the membrane and hence in the length of the OHC. The second model in which multiple charged amino acid residues are distributed at the intracellular and extracellular membrane interfaces that form an intrinsic voltage sensor, whose movement produces the non-linear capacitance (NLC). However, the effective voltage sensor may be the result of a hybrid voltage sensor, assembled from intrinsic charge (charged residues) and extrinsic charge (bound anion). Notably, binding of anions to the anion-binding pocket partially neutralizes the intrinsic positive charge rather than to form an electrically negative sensor, therefore remaining charge may serve as voltage sensor that, after depolarization, moves from down (expanded state) to up (contracted) conformation, which is accompanied by an eccentric contraction of the intermembrane cross-sectional area of the protein as well as a major increase in the hydrophobic thickness of the protein having as consequences the plasma membrane thickening and the cell contraction after membrane depolarization. The anion-binding pocket transits from the inward-open (Down) state, where it is exposed toward the intracellular solvent in the absence of anion, to the occluded (Up) state upon anion binding. Salicylate competes for the anion-binding site and inhibits the voltage-sensor movement, and therefore inhibits the charge transfer and electromotility by displacing Cl(-) from the anion-binding site and by preventing the structural transitions to the contracted state. In addition, can act as a weak Cl(-)/HCO3(-) antiporter across the cell membrane and so regulate the intracellular pH of the outer hair cells (OHCs), while firstly found as being unable to mediate electrogenic anion transport. Moreover, supports a role in cardiac mechanical amplification serving as an elastic element to enhance the actomyosin- based sarcomere contraction system. The polypeptide is Prestin (Homo sapiens (Human)).